The chain runs to 623 residues: Kelch repeat and BTB domain-containing protein 12 (623 aa).

Residues 31–98 (IDVVLTAEGE…MYNAALEINN (68 aa)) form the BTB domain. The BACK domain occupies 133-235 (CLGIYYFAKQ…NPSFLRQALR (103 aa)). Kelch repeat units follow at residues 386 to 436 (DLYV…TVNN), 437 to 492 (KLYV…VVNS), 494 to 547 (IYVL…STNA), and 553 to 603 (KLYV…LVAR).

The chain is Kelch repeat and BTB domain-containing protein 12 (KBTBD12) from Homo sapiens (Human).